The following is a 164-amino-acid chain: Cytochrome c-type biogenesis protein CcmE (164 aa).

The Cytoplasmic segment spans residues 1-8 (MNPRRKQR). Residues 9–29 (LAVVGIIGFLIVSAVGLMLYA) traverse the membrane as a helical; Signal-anchor for type II membrane protein segment. At 30–164 (LNDSIDLFYT…YESSNGAGSK (135 aa)) the chain is on the periplasmic side. Residues histidine 128 and tyrosine 132 each coordinate heme. Residues 142-164 (KGIKHVKPENMPTYESSNGAGSK) form a disordered region. Positions 154–164 (TYESSNGAGSK) are enriched in polar residues.

It belongs to the CcmE/CycJ family.

It localises to the cell inner membrane. Its function is as follows. Heme chaperone required for the biogenesis of c-type cytochromes. Transiently binds heme delivered by CcmC and transfers the heme to apo-cytochromes in a process facilitated by CcmF and CcmH. The protein is Cytochrome c-type biogenesis protein CcmE of Alteromonas mediterranea (strain DSM 17117 / CIP 110805 / LMG 28347 / Deep ecotype).